Here is a 99-residue protein sequence, read N- to C-terminus: Nucleoid-associated protein MGAS2096_Spy1605 (99 aa).

It belongs to the YbaB/EbfC family. Homodimer.

Its subcellular location is the cytoplasm. It localises to the nucleoid. In terms of biological role, binds to DNA and alters its conformation. May be involved in regulation of gene expression, nucleoid organization and DNA protection. This Streptococcus pyogenes serotype M12 (strain MGAS2096) protein is Nucleoid-associated protein MGAS2096_Spy1605.